The sequence spans 415 residues: MAIQAQKGTKDMLPNDAYKWHYIEEKLRKISAEYGIREIRTPMFEATELFKRGVGETTDVVQKEMYTFEDKGGRSITLKPEGTAPAVRAFIENSLYADAQPTKMFYFTPCFRYEKMQKGRLREFHQYGIEVFGSQEASIDAEILSLVMRALTEDFGIKGLSLNINSLGCPKCRAKFNEALKQYLKENYDNLCETCKTRFEKNPMRIIDCKEKRCKEIVKEAPSILDYICEECSDHFSKLKAYLDVMGIEYNIDPQIVRGLDYYSKTVFEVIKDGLTVCGGGRYDYLVEEVDGPKTPAMGFGLGLERLLLILDEEGIEIPEPVRCEVYIGSMGDRAKLEAMKLAFNLRKSGIKAEIDHLGKSVKAQMKYANKIGAKYTFVIGDSEIEENKIKIKRMSDGEQFEVSLDINEIVNIVK.

This sequence belongs to the class-II aminoacyl-tRNA synthetase family. Homodimer.

Its subcellular location is the cytoplasm. The catalysed reaction is tRNA(His) + L-histidine + ATP = L-histidyl-tRNA(His) + AMP + diphosphate + H(+). This chain is Histidine--tRNA ligase, found in Clostridium perfringens (strain SM101 / Type A).